A 392-amino-acid polypeptide reads, in one-letter code: Phosphoglycerate kinase (392 aa).

Substrate-binding positions include 19 to 21 (DFN), R35, 58 to 61 (HMGR), R117, and R150. ATP contacts are provided by residues K201, E323, and 349-352 (GGDS).

Belongs to the phosphoglycerate kinase family. In terms of assembly, monomer.

Its subcellular location is the cytoplasm. The catalysed reaction is (2R)-3-phosphoglycerate + ATP = (2R)-3-phospho-glyceroyl phosphate + ADP. Its pathway is carbohydrate degradation; glycolysis; pyruvate from D-glyceraldehyde 3-phosphate: step 2/5. The chain is Phosphoglycerate kinase from Desulfotalea psychrophila (strain LSv54 / DSM 12343).